The chain runs to 363 residues: Phospho-N-acetylmuramoyl-pentapeptide-transferase (363 aa).

The next 10 helical transmembrane spans lie at 3 to 23 (TVLIAGAFSLVVSLFGTPLYI), 55 to 75 (VVIILAALLAYGAAHLFTGAL), 76 to 96 (PTVSGLLVLLLMTGLGVVGFL), 116 to 136 (LAGQGLVGIVFAVLALQFPAA), 158 to 178 (LAVFGAVGGTVLFVVWALIIT), 190 to 210 (GLDGLATGATTMVLAAYVLIC), 237 to 257 (LAVVAAAVMGACFGFLWWNAS), 261 to 281 (IFMGDTGSLALGGALAGLAIL), 286 to 306 (ILLVLLGGLFVLITLSVILQV), and 340 to 360 (FWIIAGLFVFLGLGVFYAEWV).

The protein belongs to the glycosyltransferase 4 family. MraY subfamily. The cofactor is Mg(2+).

The protein resides in the cell membrane. The enzyme catalyses UDP-N-acetyl-alpha-D-muramoyl-L-alanyl-gamma-D-glutamyl-meso-2,6-diaminopimeloyl-D-alanyl-D-alanine + di-trans,octa-cis-undecaprenyl phosphate = di-trans,octa-cis-undecaprenyl diphospho-N-acetyl-alpha-D-muramoyl-L-alanyl-D-glutamyl-meso-2,6-diaminopimeloyl-D-alanyl-D-alanine + UMP. Its pathway is cell wall biogenesis; peptidoglycan biosynthesis. Its function is as follows. Catalyzes the initial step of the lipid cycle reactions in the biosynthesis of the cell wall peptidoglycan: transfers peptidoglycan precursor phospho-MurNAc-pentapeptide from UDP-MurNAc-pentapeptide onto the lipid carrier undecaprenyl phosphate, yielding undecaprenyl-pyrophosphoryl-MurNAc-pentapeptide, known as lipid I. This Kineococcus radiotolerans (strain ATCC BAA-149 / DSM 14245 / SRS30216) protein is Phospho-N-acetylmuramoyl-pentapeptide-transferase.